The primary structure comprises 198 residues: Probable chemoreceptor glutamine deamidase CheD (198 aa).

It belongs to the CheD family.

It catalyses the reaction L-glutaminyl-[protein] + H2O = L-glutamyl-[protein] + NH4(+). Functionally, probably deamidates glutamine residues to glutamate on methyl-accepting chemotaxis receptors (MCPs), playing an important role in chemotaxis. This chain is Probable chemoreceptor glutamine deamidase CheD, found in Stenotrophomonas maltophilia (strain R551-3).